Here is a 404-residue protein sequence, read N- to C-terminus: Subtilisin-like protease 3 (404 aa).

The N-terminal stretch at 1–20 is a signal peptide; the sequence is MLFSKSLVALVACFLPLIVS. A propeptide spanning residues 21-114 is cleaved from the precursor; that stretch reads ATELKLRNAA…VDKDVKVSAY (94 aa). Positions 38–112 constitute an Inhibitor I9 domain; that stretch reads SYIVVYKDID…AYVDKDVKVS (75 aa). One can recognise a Peptidase S8 domain in the interval 123 to 404; that stretch reads PWGLDRISHR…DNLAYNDDGY (282 aa). Asparagine 133 carries N-linked (GlcNAc...) asparagine glycosylation. Catalysis depends on charge relay system residues aspartate 158 and histidine 190. N-linked (GlcNAc...) asparagine glycosylation is found at asparagine 243, asparagine 251, asparagine 286, asparagine 307, and asparagine 340. Serine 347 acts as the Charge relay system in catalysis. The N-linked (GlcNAc...) asparagine glycan is linked to asparagine 366.

It belongs to the peptidase S8 family.

The protein resides in the secreted. Its function is as follows. Secreted subtilisin-like serine endopeptidase. Mediates the degradation of collagen, the major structural protein in the mammalian host. Degrades the nonhelical regions of collagen that function in the cross-linking of the helical components. May function as virulence factor involved in epidermal wing necrosis observed in white nose syndrome (WNS) in bats. This chain is Subtilisin-like protease 3, found in Pseudogymnoascus destructans (strain ATCC MYA-4855 / 20631-21) (Bat white-nose syndrome fungus).